The primary structure comprises 248 residues: Large ribosomal subunit protein uL30 (248 aa).

Position 1 is an N-acetylmethionine (M1). 4 tandem repeats follow at residues 7–18, 19–30, 31–42, and 43–54. The interval 7–54 is 4 X 12 AA tandem repeats; that stretch reads KKKEVPAVPETLKKKRRNFAELKIKRLRKKFAQKMLRKARRKLIYEKA. Residue T17 is modified to Phosphothreonine. K124 bears the N6-acetyllysine mark. K127 bears the N6-succinyllysine mark. Phosphotyrosine is present on Y139.

The protein belongs to the universal ribosomal protein uL30 family. As to quaternary structure, component of the large ribosomal subunit. Homodimer. Interacts with DHX33.

The protein resides in the cytoplasm. Its function is as follows. Component of the large ribosomal subunit. The ribosome is a large ribonucleoprotein complex responsible for the synthesis of proteins in the cell. Binds to G-rich structures in 28S rRNA and in mRNAs. Plays a regulatory role in the translation apparatus; inhibits cell-free translation of mRNAs. In Homo sapiens (Human), this protein is Large ribosomal subunit protein uL30 (RPL7).